A 290-amino-acid polypeptide reads, in one-letter code: 4-hydroxybenzoate octaprenyltransferase (290 aa).

A run of 8 helical transmembrane segments spans residues 23-43 (IGALLLLWPTLWALWVATPGM), 46-66 (LWILAVFVAGVWLMRAAGCVV), 99-119 (LFVVLVLLAFLLVLTLNAMTI), 141-161 (LPQVVLGAAFGWSIPMAFAAV), 163-183 (ESLPLSCWLMFLANILWAVAY), 212-232 (TLIIGILQLGVMALMALIGWL), 233-253 (NGLGWGYYWAVLVAGALFVYQ), and 268-288 (AFMNNNYVGLVLFLGLAMSYW).

It belongs to the UbiA prenyltransferase family. Mg(2+) is required as a cofactor.

Its subcellular location is the cell inner membrane. It carries out the reaction all-trans-octaprenyl diphosphate + 4-hydroxybenzoate = 4-hydroxy-3-(all-trans-octaprenyl)benzoate + diphosphate. Its pathway is cofactor biosynthesis; ubiquinone biosynthesis. In terms of biological role, catalyzes the prenylation of para-hydroxybenzoate (PHB) with an all-trans polyprenyl group. Mediates the second step in the final reaction sequence of ubiquinone-8 (UQ-8) biosynthesis, which is the condensation of the polyisoprenoid side chain with PHB, generating the first membrane-bound Q intermediate 3-octaprenyl-4-hydroxybenzoate. In Salmonella typhi, this protein is 4-hydroxybenzoate octaprenyltransferase.